The sequence spans 59 residues: UPF0434 protein Ping_0902 (59 aa).

The protein belongs to the UPF0434 family.

The chain is UPF0434 protein Ping_0902 from Psychromonas ingrahamii (strain DSM 17664 / CCUG 51855 / 37).